The primary structure comprises 66 residues: UPF0337 protein pc0632 (66 aa).

The protein belongs to the UPF0337 (CsbD) family.

This chain is UPF0337 protein pc0632, found in Protochlamydia amoebophila (strain UWE25).